A 311-amino-acid polypeptide reads, in one-letter code: Oligopeptide transport system permease protein OppC (311 aa).

At 1-48 (MTDYRTQPINQKNADFVEQVADRIEEMQLEGRSLWQDAKRRFFRNKAA) the chain is on the cytoplasmic side. A helical transmembrane segment spans residues 49–69 (VASLIILAFIIIFITVAPWFF). The Periplasmic segment spans residues 70-113 (PFTYEDTDWNMMSAAPTMEGYHFFGTDASGRDLLVRTAIGGRIS). One can recognise an ABC transmembrane type-1 domain in the interval 110–299 (GRISLLVGIA…LTLFCFNFIG (190 aa)). A helical membrane pass occupies residues 114-134 (LLVGIAGAFISVTIGTIYGAI). Residues 135-146 (SGYVGGKTDMLM) are Cytoplasmic-facing. The helical transmembrane segment at 147-169 (MRFLEILSSFPFMFFVILLVTLF) threads the bilayer. The Periplasmic segment spans residues 170 to 172 (GQN). The chain crosses the membrane as a helical span at residues 173–192 (IFLIFIAIGAIAWLGLARIV). Over 193 to 222 (RGQTLSLKNKEFVEAAIVCGVPRRQIILKH) the chain is Cytoplasmic. Residues 223–243 (IIPNVLGLVAVYASLEVPGLI) form a helical membrane-spanning segment. Residues 244-278 (LFESFLSFLGLGTQEPMSSWGALLSDGAAQMEVSP) are Periplasmic-facing. A helical membrane pass occupies residues 279-299 (WLLIFPAFFLCLTLFCFNFIG). Residues 300–311 (DGLRDALDPKDR) lie on the Cytoplasmic side of the membrane.

Belongs to the binding-protein-dependent transport system permease family. OppBC subfamily. As to quaternary structure, the complex is composed of two ATP-binding proteins (OppD and OppF), two transmembrane proteins (OppB and OppC) and a solute-binding protein (OppA).

Its subcellular location is the cell inner membrane. Its function is as follows. Part of the ABC transporter complex OppABCDF involved in the uptake of oligopeptides. Probably responsible for the translocation of the substrate across the membrane. The sequence is that of Oligopeptide transport system permease protein OppC (oppC) from Haemophilus influenzae (strain ATCC 51907 / DSM 11121 / KW20 / Rd).